The primary structure comprises 255 residues: Propionicin-F (255 aa).

Propeptides lie at residues 1–101 (MNTK…RVSC) and 145–255 (GTPT…DETV).

Its subcellular location is the secreted. Its function is as follows. Bacteriocin with specific antibacterial activity against strains of P.freudenreichii. No antibacterial activity was detected against P.acidipropionici, P.jensenii and P.thoenii. The sequence is that of Propionicin-F from Propionibacterium freudenreichii subsp. freudenreichii.